Here is an 88-residue protein sequence, read N- to C-terminus: Molybdopterin synthase sulfur carrier subunit (88 aa).

A 1-thioglycine; alternate modification is found at Gly88. Glycyl adenylate; alternate is present on Gly88.

Belongs to the MoaD family. MOCS2A subfamily. As to quaternary structure, heterotetramer; composed of 2 small (MOCS2A) and 2 large (MOCS2B) subunits. C-terminal thiocarboxylation occurs in 2 steps, it is first acyl-adenylated (-COAMP) via the hesA/moeB/thiF part of MOCS3, then thiocarboxylated (-COSH) via the rhodanese domain of MOCS3. In terms of tissue distribution, widely expressed. Highest levels are found in heart and skeletal muscle. Lower levels are present in brain, kidney and pancreas. Very low levels are found in lung and peripheral blood leukocytes.

The protein localises to the cytoplasm. Its subcellular location is the cytosol. The protein operates within cofactor biosynthesis; molybdopterin biosynthesis. Acts as a sulfur carrier required for molybdopterin biosynthesis. Component of the molybdopterin synthase complex that catalyzes the conversion of precursor Z into molybdopterin by mediating the incorporation of 2 sulfur atoms into precursor Z to generate a dithiolene group. In the complex, serves as sulfur donor by being thiocarboxylated (-COSH) at its C-terminus by MOCS3. After interaction with MOCS2B, the sulfur is then transferred to precursor Z to form molybdopterin. In Homo sapiens (Human), this protein is Molybdopterin synthase sulfur carrier subunit.